A 256-amino-acid polypeptide reads, in one-letter code: uncharacterized protein (256 aa).

The N-terminal stretch at 1 to 24 (MIKRVNKLVLGISLLFLVISITAG) is a signal peptide. Cysteine 25 is lipidated: N-palmitoyl cysteine. Cysteine 25 carries the S-diacylglycerol cysteine lipid modification.

This sequence belongs to the staphylococcal tandem lipoprotein family.

The protein localises to the cell membrane. This is an uncharacterized protein from Staphylococcus aureus (strain MW2).